We begin with the raw amino-acid sequence, 459 residues long: N-chimaerin (459 aa).

Alanine 2 bears the N-acetylalanine mark. An SH2 domain is found at 49 to 135; sequence EFHGMISREA…IETKAAEYIA (87 aa). The residue at position 192 (threonine 192) is a Phosphothreonine. A Phorbol-ester/DAG-type zinc finger spans residues 205 to 255; it reads IHNFKVHTFRGPHWCEYCANFMWGLIAQGVKCADCGLNVHKQCSKMVPNDC. The region spanning 268 to 459 is the Rho-GAP domain; sequence CDLTTLVKAH…LLIKNEDILF (192 aa). Threonine 340 bears the Phosphothreonine mark.

Interacts with EPHA4; effector of EPHA4 in axon guidance linking EPHA4 activation to RAC1 regulation. In terms of processing, phosphorylated. Phosphorylation is EPHA4 kinase activity-dependent. In neurons in brain regions that are involved in learning and memory processes.

Its function is as follows. GTPase-activating protein for p21-rac and a phorbol ester receptor. Involved in the assembly of neuronal locomotor circuits as a direct effector of EPHA4 in axon guidance. The sequence is that of N-chimaerin (CHN1) from Homo sapiens (Human).